The chain runs to 504 residues: Amyloid-beta A4 precursor protein-binding family B member 3 (504 aa).

Residues 29–61 form the WW domain; that stretch reads TGLPPGWRKIRDAAGTYYWHVPSGSTQWQRPTW. PID domains lie at 111-278 and 283-438; these read EPGA…QVEL and SQAA…RTSS.

In terms of assembly, interacts with APP (via intracellular domain). Interacts with APLP1 and APLP2 (via intracellular domain). Expressed predominantly in brain and testis.

It is found in the cytoplasm. The protein localises to the nucleus. Its function is as follows. May modulate the internalization of amyloid-beta precursor protein. The polypeptide is Amyloid-beta A4 precursor protein-binding family B member 3 (Rattus norvegicus (Rat)).